The following is a 277-amino-acid chain: Putative hydro-lyase SCO1412 (277 aa).

It belongs to the D-glutamate cyclase family.

The sequence is that of Putative hydro-lyase SCO1412 from Streptomyces coelicolor (strain ATCC BAA-471 / A3(2) / M145).